A 237-amino-acid polypeptide reads, in one-letter code: UPF0173 metal-dependent hydrolase BCAN_B0597 (237 aa).

The protein belongs to the UPF0173 family.

This is UPF0173 metal-dependent hydrolase BCAN_B0597 from Brucella canis (strain ATCC 23365 / NCTC 10854 / RM-666).